The following is a 188-amino-acid chain: MNGVLLAIGVLLPICLASGALLGYAAVRLRVQGDPVAERVNALLPQTQCGQCGYPGCKPYAEAIAAGDRINKCPPGGEATIQALADLLDLEPEPLDAAEETPPRVAYIREAECIGCTKCIQACPVDAIVGAARLMHTVIADECTGCDLCLEPCPVDCIEMREIAPDVRHWKWPPPSPRLIASDRERAA.

Residues 1–26 (MNGVLLAIGVLLPICLASGALLGYAA) form a hydrophobic region. One can recognise a 4Fe-4S domain in the interval 32–90 (QGDPVAERVNALLPQTQCGQCGYPGCKPYAEAIAAGDRINKCPPGGEATIQALADLLDL). [4Fe-4S] cluster is bound by residues C49, C52, C57, C73, C113, C116, C119, C123, C143, C146, C149, and C153. 4Fe-4S ferredoxin-type domains lie at 104–133 (RVAYIREAECIGCTKCIQACPVDAIVGAAR) and 134–163 (LMHTVIADECTGCDLCLEPCPVDCIEMREI).

This sequence belongs to the 4Fe4S bacterial-type ferredoxin family. RnfB subfamily. As to quaternary structure, the complex is composed of six subunits: RnfA, RnfB, RnfC, RnfD, RnfE and RnfG. Requires [4Fe-4S] cluster as cofactor.

The protein resides in the cell inner membrane. In terms of biological role, part of a membrane-bound complex that couples electron transfer with translocation of ions across the membrane. The chain is Ion-translocating oxidoreductase complex subunit B from Pseudomonas paraeruginosa (strain DSM 24068 / PA7) (Pseudomonas aeruginosa (strain PA7)).